The following is a 128-amino-acid chain: Fluoride-specific ion channel FluC (128 aa).

Transmembrane regions (helical) follow at residues 4 to 24 (VMGI…RYAI), 37 to 57 (FGTF…WSFF), 65 to 85 (TFRL…STFS), and 101 to 121 (FGYL…GFFI). Gly76 and Thr79 together coordinate Na(+).

Belongs to the fluoride channel Fluc/FEX (TC 1.A.43) family.

It localises to the cell inner membrane. It carries out the reaction fluoride(in) = fluoride(out). Its activity is regulated as follows. Na(+) is not transported, but it plays an essential structural role and its presence is essential for fluoride channel function. In terms of biological role, fluoride-specific ion channel. Important for reducing fluoride concentration in the cell, thus reducing its toxicity. The protein is Fluoride-specific ion channel FluC of Desulfotalea psychrophila (strain LSv54 / DSM 12343).